Consider the following 204-residue polypeptide: Cell wall protein RHD3 (204 aa).

An N-terminal signal peptide occupies residues 1–15 (MKFLAILSLSSSALA). Gly182 is lipidated: GPI-anchor amidated glycine. Residues 183–204 (AAGQNKLSYGVGMAAVVAGLVM) constitute a propeptide, removed in mature form.

Belongs to the SRP1/TIP1 family. The GPI-anchor is attached to the protein in the endoplasmic reticulum and serves to target the protein to the cell surface. There, the glucosamine-inositol phospholipid moiety is cleaved off and the GPI-modified mannoprotein is covalently attached via its lipidless GPI glycan remnant to the 1,6-beta-glucan of the outer cell wall layer. In terms of processing, O-glycosylated by PMT1.

Its subcellular location is the secreted. It localises to the cell wall. It is found in the membrane. Component of the cell wall involved in virulence. Does not seem to have a major role in maintaining cell wall integrity but plays a role in the relationship between C.albicans and the host. The protein is Cell wall protein RHD3 (RHD3) of Candida albicans (strain SC5314 / ATCC MYA-2876) (Yeast).